The sequence spans 211 residues: Small ribosomal subunit protein bS6c alpha (211 aa).

Residues 1–19 show a composition bias toward low complexity; the sequence is MATFSLTSTLPSSSPTTSL. 2 disordered regions span residues 1–25 and 80–100; these read MATF…IPKP and DEDP…PEPQ. The transit peptide at 1-65 directs the protein to the chloroplast; sequence MATFSLTSTL…YGPYVKAIAL (65 aa).

This sequence belongs to the bacterial ribosomal protein bS6 family. As to quaternary structure, component of the chloroplast small ribosomal subunit (SSU). Mature 70S chloroplast ribosomes of higher plants consist of a small (30S) and a large (50S) subunit. The 30S small subunit contains 1 molecule of ribosomal RNA (16S rRNA) and 24 different proteins. The 50S large subunit contains 3 rRNA molecules (23S, 5S and 4.5S rRNA) and 33 different proteins.

The protein resides in the plastid. Its subcellular location is the chloroplast. Its function is as follows. Component of the chloroplast ribosome (chloro-ribosome), a dedicated translation machinery responsible for the synthesis of chloroplast genome-encoded proteins, including proteins of the transcription and translation machinery and components of the photosynthetic apparatus. The protein is Small ribosomal subunit protein bS6c alpha (RPS6) of Spinacia oleracea (Spinach).